Consider the following 231-residue polypeptide: Achaete-scute homolog 1 (231 aa).

2 disordered regions span residues 1–24 and 39–92; these read MESSGKMESGAGQQPQPPQPFLPP and AAAA…PELM. The segment covering 39 to 51 has biased composition (low complexity); the sequence is AAAAAQSAQQQQP. Residues 76–85 show a composition bias toward basic residues; the sequence is SAAKQVKRQR. Residues 113 to 165 enclose the bHLH domain; sequence AAVARRNERERNRVKLVNLGFATLREHVPNGAANKKMSKVETLRSAVEYIRAL. N6-acetyllysine is present on K151.

In terms of assembly, efficient DNA binding requires dimerization with another bHLH protein. Forms a heterodimer with TCF3. Developing CNS and PNS at embryonic and postnatal stages. Expressed in the epithelium of glandular stomach.

It localises to the nucleus. Its function is as follows. Transcription factor that plays a key role in neuronal differentiation: acts as a pioneer transcription factor, accessing closed chromatin to allow other factors to bind and activate neural pathways. Directly binds the E box motif (5'-CANNTG-3') on promoters and promotes transcription of neuronal genes. The combination of three transcription factors, ASCL1, POU3F2/BRN2 and MYT1L, is sufficient to reprogram fibroblasts and other somatic cells into induced neuronal (iN) cells in vitro. Plays a role at early stages of development of specific neural lineages in most regions of the CNS, and of several lineages in the PNS. Essential for the generation of olfactory and autonomic neurons. Acts synergistically with FOXN4 to specify the identity of V2b neurons rather than V2a from bipotential p2 progenitors during spinal cord neurogenesis, probably through DLL4-NOTCH signaling activation. Involved in the regulation of neuroendocrine cell development in the glandular stomach. The sequence is that of Achaete-scute homolog 1 from Mus musculus (Mouse).